The following is a 951-amino-acid chain: Bifunctional glutamine synthetase adenylyltransferase/adenylyl-removing enzyme (951 aa).

The tract at residues 1–440 (MLPLPSELQI…VFDDLIGDET (440 aa)) is adenylyl removase. The segment at 449-951 (HGLYKSLWQD…WLAANDANVS (503 aa)) is adenylyl transferase.

Belongs to the GlnE family. Mg(2+) serves as cofactor.

The catalysed reaction is [glutamine synthetase]-O(4)-(5'-adenylyl)-L-tyrosine + phosphate = [glutamine synthetase]-L-tyrosine + ADP. The enzyme catalyses [glutamine synthetase]-L-tyrosine + ATP = [glutamine synthetase]-O(4)-(5'-adenylyl)-L-tyrosine + diphosphate. Its function is as follows. Involved in the regulation of glutamine synthetase GlnA, a key enzyme in the process to assimilate ammonia. When cellular nitrogen levels are high, the C-terminal adenylyl transferase (AT) inactivates GlnA by covalent transfer of an adenylyl group from ATP to specific tyrosine residue of GlnA, thus reducing its activity. Conversely, when nitrogen levels are low, the N-terminal adenylyl removase (AR) activates GlnA by removing the adenylyl group by phosphorolysis, increasing its activity. The regulatory region of GlnE binds the signal transduction protein PII (GlnB) which indicates the nitrogen status of the cell. The polypeptide is Bifunctional glutamine synthetase adenylyltransferase/adenylyl-removing enzyme (Yersinia pestis bv. Antiqua (strain Antiqua)).